We begin with the raw amino-acid sequence, 461 residues long: Porin AaxA (461 aa).

A signal peptide spans 1–22 (MSFRSVLLTALLSLSFTTTMQA).

This sequence belongs to the OprB family.

The protein resides in the cell outer membrane. Its function is as follows. Facilitates L-arginine uptake, as part of the AaxABC system. The arginine uptake by the bacterium in the macrophage may be a virulence factor against the host innate immune response. The polypeptide is Porin AaxA (aaxA) (Chlamydia trachomatis serovar D (strain ATCC VR-885 / DSM 19411 / UW-3/Cx)).